Consider the following 345-residue polypeptide: DNA-directed RNA polymerase subunit alpha (345 aa).

Residues 1 to 234 (MRKNEMSTSK…DLLTTFLYVR (234 aa)) are alpha N-terminal domain (alpha-NTD). Residues 266–345 (LEERVLENRF…DKKIVLNRRK (80 aa)) are alpha C-terminal domain (alpha-CTD).

This sequence belongs to the RNA polymerase alpha chain family. As to quaternary structure, in plastids the minimal PEP RNA polymerase catalytic core is composed of four subunits: alpha, beta, beta', and beta''. When a (nuclear-encoded) sigma factor is associated with the core the holoenzyme is formed, which can initiate transcription.

It is found in the plastid. The protein localises to the chloroplast. The catalysed reaction is RNA(n) + a ribonucleoside 5'-triphosphate = RNA(n+1) + diphosphate. In terms of biological role, DNA-dependent RNA polymerase catalyzes the transcription of DNA into RNA using the four ribonucleoside triphosphates as substrates. This Adiantum capillus-veneris (Maidenhair fern) protein is DNA-directed RNA polymerase subunit alpha.